The primary structure comprises 264 residues: Polyneuridine aldehyde esterase (264 aa).

Residues 1 to 6 (MHSAAN) constitute a propeptide that is removed on maturation. One can recognise an AB hydrolase-1 domain in the interval 12–122 (HFVLVHGGCL…MMPDPNHSLT (111 aa)). Residues S87, D216, and H244 contribute to the active site. Residue S87 participates in 16-epivellosimine binding.

This sequence belongs to the AB hydrolase superfamily. In terms of assembly, homodimer; homodimerizes in aqueous solutions at pH 7.0. Mainly expressed in roots and, to a lower level, in leaves.

The enzyme catalyses polyneuridine aldehyde + H2O = 16-epivellosimine + methanol + CO2. It participates in alkaloid biosynthesis; ajmaline biosynthesis. Its activity is regulated as follows. Inhibited by DEPC and HgCl(2). In terms of biological role, hydrolase involved in the biosynthesis of ajmaline-type monoterpenoid indole alkaloids (MIAs) natural products, important plant-derived pharmaceuticals used in the therapy of heart disorders. Catalyzes the hydrolysis of polyneuridine aldehyde into epi-vellosimine, precursor of vomilenine, an intermediate chemical in the biosynthesis of ajmaline. In Rauvolfia serpentina (Serpentine wood), this protein is Polyneuridine aldehyde esterase.